Here is a 439-residue protein sequence, read N- to C-terminus: Xylose isomerase (439 aa).

Active-site residues include histidine 101 and aspartate 104. Mg(2+) contacts are provided by glutamate 232, glutamate 268, histidine 271, aspartate 296, aspartate 307, aspartate 309, and aspartate 339.

Belongs to the xylose isomerase family. Homotetramer. It depends on Mg(2+) as a cofactor.

The protein resides in the cytoplasm. The enzyme catalyses alpha-D-xylose = alpha-D-xylulofuranose. The protein is Xylose isomerase of Photorhabdus laumondii subsp. laumondii (strain DSM 15139 / CIP 105565 / TT01) (Photorhabdus luminescens subsp. laumondii).